A 580-amino-acid polypeptide reads, in one-letter code: Peptide transporter PTR_B (580 aa).

The segment covering 1 to 30 has biased composition (basic and acidic residues); that stretch reads MSTEKLQNDDKVVDEKYVDADEHSLVRSQD. Residues 1 to 45 are disordered; it reads MSTEKLQNDDKVVDEKYVDADEHSLVRSQDESFPQTEEGGEPTDH. Residues 57–78 traverse the membrane as a helical segment; the sequence is IPMSCWLVAIVELSERFTYYGL. Residue asparagine 101 is glycosylated (N-linked (GlcNAc...) asparagine). 11 helical membrane-spanning segments follow: residues 107 to 127, 134 to 154, 163 to 183, 219 to 239, 249 to 269, 326 to 346, 370 to 390, 402 to 422, 449 to 469, 484 to 504, and 513 to 533; these read ALSY…AWIA, YFTI…LFIT, TTSL…TGGI, VSNV…SVIA, FWAA…ALVL, ALYA…YGQM, INSI…YPFI, IFWG…LQHF, IALQ…ASIT, SFIM…GIAL, and MVWT…IFWF.

Belongs to the major facilitator superfamily. Proton-dependent oligopeptide transporter (POT/PTR) (TC 2.A.17) family.

Its subcellular location is the cell membrane. The catalysed reaction is a dipeptide(out) + H(+)(out) = a dipeptide(in) + H(+)(in). The enzyme catalyses an L-amino acid tripeptide(out) + H(+)(out) = an L-amino acid tripeptide(in) + H(+)(in). Peptide transporter that exploits the inwardly directed proton motive force to facilitate the cellular uptake of di/tripeptides. Shows strong uptake specificity towards the dipeptides Tyr-Phe and Gly-His, when compared to PTR_A and PTR_C. The protein is Peptide transporter PTR_B of Candidozyma auris (Yeast).